Here is a 126-residue protein sequence, read N- to C-terminus: Holo-[acyl-carrier-protein] synthase (126 aa).

Mg(2+) is bound by residues D8 and E57.

This sequence belongs to the P-Pant transferase superfamily. AcpS family. Mg(2+) is required as a cofactor.

It is found in the cytoplasm. The enzyme catalyses apo-[ACP] + CoA = holo-[ACP] + adenosine 3',5'-bisphosphate + H(+). Transfers the 4'-phosphopantetheine moiety from coenzyme A to a Ser of acyl-carrier-protein. In Vibrio cholerae serotype O1 (strain ATCC 39541 / Classical Ogawa 395 / O395), this protein is Holo-[acyl-carrier-protein] synthase.